The primary structure comprises 363 residues: MERVYNFSAGPAVLPVPVLEKVQRELLSYNGSGMSVMELSHRSELFQNILDDAESLIRELMEIPENYKVLFLQGGASLQFDMVPMNLANGKKAAYVNTGSWAKKAISEAKKIQGVEVEVIASSEDRNFSYIPEIPTVSSDAAYLHVTTNNTIEGTAMFDVPDSAVPVVADMSSNILSSVYDVKKFGLIYAGAQKNIGPAGLTLVIVREDLIGQVEGLPSMLDFKVQAENDSMYNTPPTFAIYVAKLVFEWIKEQGGVAGIEALNRKKAALLYNYIDQSDFFSSPVEPSARSLTNVPFVTNSAEFDKAFVQEAEANGFKNLKGHRSVGGMRASLYNAFPIEGVEALIAFMEKFANARKGGEVRV.

An L-glutamate-binding site is contributed by Arg-42. Pyridoxal 5'-phosphate-binding positions include 76–77 (AS), Trp-101, Thr-151, Asp-170, and Gln-193. Lys-194 carries the post-translational modification N6-(pyridoxal phosphate)lysine. 234–235 (NT) is a binding site for pyridoxal 5'-phosphate.

This sequence belongs to the class-V pyridoxal-phosphate-dependent aminotransferase family. SerC subfamily. As to quaternary structure, homodimer. Requires pyridoxal 5'-phosphate as cofactor.

The protein resides in the cytoplasm. The enzyme catalyses O-phospho-L-serine + 2-oxoglutarate = 3-phosphooxypyruvate + L-glutamate. It carries out the reaction 4-(phosphooxy)-L-threonine + 2-oxoglutarate = (R)-3-hydroxy-2-oxo-4-phosphooxybutanoate + L-glutamate. Its pathway is amino-acid biosynthesis; L-serine biosynthesis; L-serine from 3-phospho-D-glycerate: step 2/3. Functionally, catalyzes the reversible conversion of 3-phosphohydroxypyruvate to phosphoserine and of 3-hydroxy-2-oxo-4-phosphonooxybutanoate to phosphohydroxythreonine. The polypeptide is Phosphoserine aminotransferase (Listeria monocytogenes serotype 4b (strain F2365)).